Reading from the N-terminus, the 242-residue chain is Ribonuclease 3 2 (242 aa).

An RNase III domain is found at 12-137 (LESLVRKLGL…VLGALYLSTS (126 aa)). Glu-51 provides a ligand contact to Mg(2+). Asp-55 is an active-site residue. Asp-123 and Glu-126 together coordinate Mg(2+). The active site involves Glu-126. A DRBM domain is found at 165–235 (NYKAALQEWT…AKVAFLAITP (71 aa)).

Belongs to the ribonuclease III family. Homodimer. Mg(2+) is required as a cofactor.

Its subcellular location is the cytoplasm. The enzyme catalyses Endonucleolytic cleavage to 5'-phosphomonoester.. Digests double-stranded RNA. Involved in the processing of primary rRNA transcript to yield the immediate precursors to the large and small rRNAs (23S and 16S). Processes some mRNAs, and tRNAs when they are encoded in the rRNA operon. Processes pre-crRNA and tracrRNA of type II CRISPR loci if present in the organism. This Nostoc sp. (strain PCC 7120 / SAG 25.82 / UTEX 2576) protein is Ribonuclease 3 2 (rnc2).